The primary structure comprises 436 residues: GDP-mannose 6-dehydrogenase (436 aa).

NAD(+) contacts are provided by Tyr10, Val11, Asp30, Lys35, Thr86, and Thr124. Residues Glu161, Lys210, Asn214, His217, Asn225, Tyr256, Tyr257, Arg259, and Gly265 each coordinate GDP-alpha-D-mannuronate. The active site involves Cys268. Lys271 contacts NAD(+). Lys324 provides a ligand contact to GDP-alpha-D-mannuronate. An NAD(+)-binding site is contributed by Arg331.

The protein belongs to the UDP-glucose/GDP-mannose dehydrogenase family.

The catalysed reaction is GDP-alpha-D-mannose + 2 NAD(+) + H2O = GDP-alpha-D-mannuronate + 2 NADH + 3 H(+). The protein operates within glycan biosynthesis; alginate biosynthesis. Its function is as follows. Catalyzes the oxidation of guanosine diphospho-D-mannose (GDP-D-mannose) to GDP-D-mannuronic acid, a precursor for alginate polymerization. The alginate layer causes a mucoid phenotype and is essential for cyst formation. The sequence is that of GDP-mannose 6-dehydrogenase (algD) from Azotobacter vinelandii.